Consider the following 160-residue polypeptide: Small ribosomal subunit protein uS7B (160 aa).

The protein belongs to the universal ribosomal protein uS7 family. Part of the 30S ribosomal subunit. Contacts proteins S9 and S11.

Functionally, one of the primary rRNA binding proteins, it binds directly to 16S rRNA where it nucleates assembly of the head domain of the 30S subunit. Is located at the subunit interface close to the decoding center, probably blocks exit of the E-site tRNA. This chain is Small ribosomal subunit protein uS7B, found in Aquifex aeolicus (strain VF5).